A 100-amino-acid polypeptide reads, in one-letter code: Large ribosomal subunit protein uL23 (100 aa).

It belongs to the universal ribosomal protein uL23 family. As to quaternary structure, part of the 50S ribosomal subunit. Contacts protein L29, and trigger factor when it is bound to the ribosome.

Functionally, one of the early assembly proteins it binds 23S rRNA. One of the proteins that surrounds the polypeptide exit tunnel on the outside of the ribosome. Forms the main docking site for trigger factor binding to the ribosome. In Mycobacteroides abscessus (strain ATCC 19977 / DSM 44196 / CCUG 20993 / CIP 104536 / JCM 13569 / NCTC 13031 / TMC 1543 / L948) (Mycobacterium abscessus), this protein is Large ribosomal subunit protein uL23.